A 216-amino-acid chain; its full sequence is Uracil phosphoribosyltransferase (216 aa).

CTP contacts are provided by residues 29-30 (RK) and R37. 30-34 (KNLVR) is a binding site for GTP. Position 80 (R80) interacts with 5-phospho-alpha-D-ribose 1-diphosphate. Residue 87–96 (EGLLKAFPKA) participates in CTP binding. Residues R105 and 140-148 (DPMIATAST) each bind 5-phospho-alpha-D-ribose 1-diphosphate. Residues I203 and 208–210 (GDA) each bind uracil. D209 contributes to the 5-phospho-alpha-D-ribose 1-diphosphate binding site.

The protein belongs to the UPRTase family. As to quaternary structure, homotetramer. Mg(2+) serves as cofactor.

It carries out the reaction UMP + diphosphate = 5-phospho-alpha-D-ribose 1-diphosphate + uracil. The protein operates within pyrimidine metabolism; UMP biosynthesis via salvage pathway; UMP from uracil: step 1/1. Its activity is regulated as follows. Allosterically activated by GTP. Inhibited by CTP and UMP in combination. Its function is as follows. Catalyzes the conversion of uracil and 5-phospho-alpha-D-ribose 1-diphosphate (PRPP) to UMP and diphosphate. The protein is Uracil phosphoribosyltransferase (upp) of Saccharolobus solfataricus (strain ATCC 35092 / DSM 1617 / JCM 11322 / P2) (Sulfolobus solfataricus).